We begin with the raw amino-acid sequence, 130 residues long: Inner membrane protein YqjF (130 aa).

Residues Met-1–Glu-5 are Cytoplasmic-facing. Residues Asp-6–Gly-26 traverse the membrane as a helical segment. At Lys-27–Gly-45 the chain is on the periplasmic side. The chain crosses the membrane as a helical span at residues Phe-46–Phe-66. Topologically, residues Leu-67–Thr-70 are cytoplasmic. A helical transmembrane segment spans residues Thr-71–Ala-91. The Periplasmic portion of the chain corresponds to Glu-92–Lys-101. The chain crosses the membrane as a helical span at residues Asn-102–Ile-122. The Cytoplasmic portion of the chain corresponds to Asp-123–Trp-130.

The protein belongs to the DoxX family.

The protein resides in the cell inner membrane. This Escherichia coli (strain K12) protein is Inner membrane protein YqjF (yqjF).